A 606-amino-acid chain; its full sequence is Aspartate--tRNA(Asp/Asn) ligase (606 aa).

Glu196 contributes to the L-aspartate binding site. Residues 220–223 (QIFK) form an aspartate region. Arg242 serves as a coordination point for L-aspartate. Residues 242–244 (RDE) and Gln251 contribute to the ATP site. An L-aspartate-binding site is contributed by His465. Glu499 is a binding site for ATP. Residue Arg506 coordinates L-aspartate. 551-554 (GMDR) lines the ATP pocket.

It belongs to the class-II aminoacyl-tRNA synthetase family. Type 1 subfamily. In terms of assembly, homodimer.

The protein resides in the cytoplasm. It carries out the reaction tRNA(Asx) + L-aspartate + ATP = L-aspartyl-tRNA(Asx) + AMP + diphosphate. In terms of biological role, aspartyl-tRNA synthetase with relaxed tRNA specificity since it is able to aspartylate not only its cognate tRNA(Asp) but also tRNA(Asn). Reaction proceeds in two steps: L-aspartate is first activated by ATP to form Asp-AMP and then transferred to the acceptor end of tRNA(Asp/Asn). The polypeptide is Aspartate--tRNA(Asp/Asn) ligase (Oleidesulfovibrio alaskensis (strain ATCC BAA-1058 / DSM 17464 / G20) (Desulfovibrio alaskensis)).